Here is a 382-residue protein sequence, read N- to C-terminus: Gap junction alpha-1 protein (382 aa).

The Cytoplasmic segment spans residues 2 to 23 (GDWSALGKLLDKVQAYSTAGGK). Phosphoserine is present on S5. The helical transmembrane segment at 24–44 (VWLSVLFIFRILLLGTAVESA) threads the bilayer. Topologically, residues 45–76 (WGDEQSAFRCNTQQPGCENVCYDKSFPISHVR) are extracellular. Intrachain disulfides connect C54-C192 and C187-C198. The chain crosses the membrane as a helical span at residues 77 to 97 (FWVLQIIFVSVPTLLYLAHVF). Over 98–155 (YVMRKEEKLNKKEEELKVAQTDGVNVEMHLKQIEIKKFKYGIEEHGKVKMRGGLLRTY) the chain is Cytoplasmic. A Glycyl lysine isopeptide (Lys-Gly) (interchain with G-Cter in SUMO) cross-link involves residue K144. A helical membrane pass occupies residues 156–176 (IISILFKSVFEVAFLLIQWYI). Residues 177-207 (YGFSLSAVYTCKRDPCPHQVDCFLSRPTEKT) are Extracellular-facing. The chain crosses the membrane as a helical span at residues 208 to 228 (IFIIFMLVVSLVSLALNIIEL). Residues 229–382 (FYVFFKGVKD…SRPRPDDLEI (154 aa)) lie on the Cytoplasmic side of the membrane. Residue K237 forms a Glycyl lysine isopeptide (Lys-Gly) (interchain with G-Cter in SUMO) linkage. The interval 244–382 (SDPYHATTGP…SRPRPDDLEI (139 aa)) is interaction with NOV. Y247 carries the post-translational modification Phosphotyrosine. Phosphoserine is present on residues S255, S257, and S262. Residues 264 to 382 (KYAYFNGCSS…SRPRPDDLEI (119 aa)) form an interaction with UBQLN4 region. S-nitrosocysteine is present on C271. The residue at position 275 (T275) is a Phosphothreonine. S306 and S314 each carry phosphoserine. Over residues 317 to 332 (QNRMGQAGSTISNSHA) the composition is skewed to polar residues. The interval 317 to 382 (QNRMGQAGST…SRPRPDDLEI (66 aa)) is disordered. S325 bears the Phosphoserine; by CK1 mark. A Phosphothreonine modification is found at T326. S328 and S330 each carry phosphoserine; by CK1. Phosphoserine occurs at positions 344 and 365. Positions 362–374 (RPSSRASSRASSR) are enriched in low complexity. The residue at position 368 (S368) is a Phosphoserine; by PKC/PRKCG and PKC/PRKCD. Phosphoserine is present on residues S369 and S373.

This sequence belongs to the connexin family. Alpha-type (group II) subfamily. In terms of assembly, a connexon is composed of a hexamer of connexins. Interacts with SGSM3. Interacts with RIC1/CIP150. Interacts with CNST and CSNK1D. Interacts (via C-terminus) with TJP1. Interacts (via C-terminus) with SRC (via SH3 domain). Interacts (not ubiquitinated) with UBQLN4 (via UBA domain). Interacts with NOV. Interacts with TMEM65. Interacts with ANK3/ANKG and PKP2. Post-translationally, phosphorylation at Ser-325, Ser-328 and Ser-330 by CK1 modulates gap junction assembly. Phosphorylated at Ser-368 by PRKCG; phosphorylation induces disassembly of gap junction plaques and inhibition of gap junction activity. Phosphorylation at Ser-368 by PRKCD triggers its internalization into small vesicles leading to proteasome-mediated degradation. In terms of processing, sumoylated with SUMO1, SUMO2 and SUMO3, which may regulate the level of functional Cx43 gap junctions at the plasma membrane. May be desumoylated by SENP1 or SENP2. S-nitrosylation at Cys-271 is enriched at the muscle endothelial gap junction in arteries, it augments channel permeability and may regulate of smooth muscle cell to endothelial cell communication. Post-translationally, acetylated in the developing cortex; leading to delocalization from the cell membrane.

It localises to the cell membrane. Its subcellular location is the cell junction. The protein localises to the gap junction. It is found in the endoplasmic reticulum. Gap junction protein that acts as a regulator of bladder capacity. A gap junction consists of a cluster of closely packed pairs of transmembrane channels, the connexons, through which materials of low MW diffuse from one cell to a neighboring cell. May play a critical role in the physiology of hearing by participating in the recycling of potassium to the cochlear endolymph. Negative regulator of bladder functional capacity: acts by enhancing intercellular electrical and chemical transmission, thus sensitizing bladder muscles to cholinergic neural stimuli and causing them to contract. May play a role in cell growth inhibition through the regulation of NOV expression and localization. Plays an essential role in gap junction communication in the ventricles. In Ursus americanus (American black bear), this protein is Gap junction alpha-1 protein (GJA1).